The sequence spans 462 residues: Cysteine proteinase RD21A (462 aa).

The signal sequence occupies residues 1 to 21; the sequence is MGFLKPTMAILFLAMVAVSSA. Residues 22–136 constitute a propeptide, activation peptide; it reads VDMSIISYDE…LRYEARVGDE (115 aa). An N-linked (GlcNAc...) asparagine glycan is attached at N90. Cystine bridges form between C158-C200, C192-C233, C291-C342, C375-C387, and C381-C402. C161 is a catalytic residue. Active-site residues include H297 and N317. Residues 353–462 constitute a propeptide, removed in mature form; the sequence is KNGENPPNPG…FWSQGRKNIA (110 aa). The N-linked (GlcNAc...) asparagine glycan is linked to N414.

This sequence belongs to the peptidase C1 family. In terms of assembly, interacts with SERPIN1. Interacts with PRN2. Interacts with WSCP. Interacts with TZF4, TZF5 and TZF6.

The protein resides in the vacuole. The protein localises to the golgi apparatus. It localises to the cytoplasm. It is found in the stress granule. Its subcellular location is the P-body. Inhibited by the cysteine protease inhibitor E64 (L-trans-epoxysuccinyl-leucylamide-(4-guanido)-butane). Functionally, cysteine protease that plays a role in immunity, senescence, and biotic and abiotic stresses. Involved in immunity against the necrotrophic fungal pathogen Botrytis cinerea. Involved in elicitor-stimulated programmed cell death (PCD). During infection by the necrotrophic fungal pathogen Botrytis cinerea, functions as a PCD-promoting protease that is released from the ER body or vacuole to the cytoplasm. Accumulates in endoplasmic reticulum-derived bodies in epidermal cells and may participate in cell death in stressed or injured cells. Involved in water stress-induced cell death through its protease activity that is released to the cytoplasm after vacuolar collapse. Possesses protease activity in vitro and is involved in cell death in the transmitting tract and septum epidermis during flower development. Possesses peptide ligase activity. Can ligate peptides to unmodified N-termini of acceptor proteins. Probably ligates through a thioester intermediate. The sequence is that of Cysteine proteinase RD21A from Arabidopsis thaliana (Mouse-ear cress).